The following is a 390-amino-acid chain: Queuine tRNA-ribosyltransferase (390 aa).

The active-site Proton acceptor is Asp92. Residues 92–96, Asp146, Gln195, and Gly222 contribute to the substrate site; that span reads DSGGF. Positions 253 to 259 are RNA binding; that stretch reads GVGTPED. The active-site Nucleophile is Asp272. The RNA binding; important for wobble base 34 recognition stretch occupies residues 277-281; sequence TRNAR. Residues Cys310, Cys312, Cys315, and His354 each coordinate Zn(2+).

The protein belongs to the queuine tRNA-ribosyltransferase family. As to quaternary structure, homodimer. Within each dimer, one monomer is responsible for RNA recognition and catalysis, while the other monomer binds to the replacement base PreQ1. Requires Zn(2+) as cofactor.

The catalysed reaction is 7-aminomethyl-7-carbaguanine + guanosine(34) in tRNA = 7-aminomethyl-7-carbaguanosine(34) in tRNA + guanine. Its pathway is tRNA modification; tRNA-queuosine biosynthesis. Its function is as follows. Catalyzes the base-exchange of a guanine (G) residue with the queuine precursor 7-aminomethyl-7-deazaguanine (PreQ1) at position 34 (anticodon wobble position) in tRNAs with GU(N) anticodons (tRNA-Asp, -Asn, -His and -Tyr). Catalysis occurs through a double-displacement mechanism. The nucleophile active site attacks the C1' of nucleotide 34 to detach the guanine base from the RNA, forming a covalent enzyme-RNA intermediate. The proton acceptor active site deprotonates the incoming PreQ1, allowing a nucleophilic attack on the C1' of the ribose to form the product. After dissociation, two additional enzymatic reactions on the tRNA convert PreQ1 to queuine (Q), resulting in the hypermodified nucleoside queuosine (7-(((4,5-cis-dihydroxy-2-cyclopenten-1-yl)amino)methyl)-7-deazaguanosine). The polypeptide is Queuine tRNA-ribosyltransferase (Acidovorax sp. (strain JS42)).